The primary structure comprises 43 residues: Gene 75 protein (43 aa).

The polypeptide is Gene 75 protein (75) (Mycobacterium (Mycobacteriophage L5)).